The chain runs to 270 residues: Putative phosphatase YxeH (270 aa).

The active-site Nucleophile is the aspartate 8. Residue aspartate 8 participates in Mg(2+) binding. Methionine 9 contributes to the phosphate binding site. A Mg(2+)-binding site is contributed by aspartate 10. Phosphate contacts are provided by residues threonine 42–glycine 43 and lysine 196. Aspartate 219 lines the Mg(2+) pocket. Residue asparagine 222 coordinates phosphate.

The protein belongs to the HAD-like hydrolase superfamily. Cof family. It depends on Mg(2+) as a cofactor.

This is Putative phosphatase YxeH (yxeH) from Bacillus subtilis (strain 168).